We begin with the raw amino-acid sequence, 240 residues long: Large ribosomal subunit protein uL3 (240 aa).

Disordered stretches follow at residues 138-158 (SISH…KTFK) and 215-240 (EAPL…SAEG). The residue at position 151 (Gln151) is an N5-methylglutamine.

It belongs to the universal ribosomal protein uL3 family. As to quaternary structure, part of the 50S ribosomal subunit. Forms a cluster with proteins L14 and L19. In terms of processing, methylated by PrmB.

One of the primary rRNA binding proteins, it binds directly near the 3'-end of the 23S rRNA, where it nucleates assembly of the 50S subunit. In Beijerinckia indica subsp. indica (strain ATCC 9039 / DSM 1715 / NCIMB 8712), this protein is Large ribosomal subunit protein uL3.